Consider the following 199-residue polypeptide: Transcriptional regulatory protein DesR (199 aa).

In terms of domain architecture, Response regulatory spans 3–117; sequence SIFIAEDQQM…ELANAIRSVM (115 aa). Aspartate 54 carries the post-translational modification 4-aspartylphosphate. An HTH luxR-type domain is found at 131 to 196; it reads LYSEANPLTD…EAITRSKEKG (66 aa). The H-T-H motif DNA-binding region spans 155-174; it reads TKEIAQELSIKSGTVRNYIS.

Post-translationally, phosphorylated by DesK.

It localises to the cytoplasm. Member of the two-component regulatory system DesR/DesK, responsible for cold induction of the des gene coding for the Delta5 acyl-lipid desaturase. The chain is Transcriptional regulatory protein DesR (desR) from Bacillus subtilis (strain 168).